A 2313-amino-acid chain; its full sequence is MARFGEAVVARPGSGDGDSDQSRNRQGTPVPASGQAAAYKQTKAQRARTMALYNPIPVRQNCFTVNRSLFIFGEDNIVRKYAKKLIDWPPFEYMILATIIANCIVLALEQHLPEDDKTPMSRRLEKTEPYFIGIFCFEAGIKIVALGFIFHKGSYLRNGWNVMDFIVVLSGILATAGTHFNTHVDLRTLRAVRVLRPLKLVSGIPSLQIVLKSIMKAMVPLLQIGLLLFFAILMFAIIGLEFYSGKLHRACFMNNSGILEGFDPPHPCGVQGCPAGYECKDWIGPNDGITQFDNILFAVLTVFQCITMEGWTTVLYNTNDALGATWNWLYFIPLIIIGSFFVLNLVLGVLSGEFAKERERVENRRAFMKLRRQQQIERELNGYRAWIDKAEEVMLAEENKNAGTSALEVLRRATIKRSRTEAMTRDSSDEHCVDISSVGTPLARASIKSAKVDGVSYFRHKERLLRISIRHMVKSQVFYWIVLSLVALNTACVAIVHHNQPQWLTHLLYYAEFLFLGLFLLEMSLKMYGMGPRLYFHSSFNCFDFGVTVGSIFEVVWAIFRPGTSFGISVLRALRLLRIFKITKYWASLRNLVVSLMSSMKSIISLLFLLFLFIVVFALLGMQLFGGRFNFNDGTPSANFDTFPAAIMTVFQILTGEDWNEVMYNGIRSQGGVSSGMWSAIYFIVLTLFGNYTLLNVFLAIAVDNLANAQELTKDEQEEEEAFNQKHALQKAKEVSPMSAPNMPSIERDRRRRHHMSMWEPRSSHLRERRRRHHMSVWEQRTSQLRKHMQMSSQEALNREEAPTMNPLNPLNPLSSLNPLNAHPSLYRRPRAIEGLALGLALEKFEEERISRGGSLKGDGGDRSSALDNQRTPLSLGQREPPWLARPCHGNCDPTQQEAGGGEAVVTFEDRARHRQSQRRSRHRRVRTEGKESSSASRSRSASQERSLDEAMPTEGEKDHELRGNHGAKEPTIQEERAQDLRRTNSLMVSRGSGLAGGLDEADTPLVLPHPELEVGKHVVLTEQEPEGSSEQALLGNVQLDMGRVISQSEPDLSCITANTDKATTESTSVTVAIPDVDPLVDSTVVHISNKTDGEASPLKEAEIREDEEEVEKKKQKKEKRETGKAMVPHSSMFIFSTTNPIRRACHYIVNLRYFEMCILLVIAASSIALAAEDPVLTNSERNKVLRYFDYVFTGVFTFEMVIKMIDQGLILQDGSYFRDLWNILDFVVVVGALVAFALANALGTNKGRDIKTIKSLRVLRVLRPLKTIKRLPKLKAVFDCVVTSLKNVFNILIVYKLFMFIFAVIAVQLFKGKFFYCTDSSKDTEKECIGNYVDHEKNKMEVKGREWKRHEFHYDNIIWALLTLFTVSTGEGWPQVLQHSVDVTEEDRGPSRSNRMEMSIFYVVYFVVFPFFFVNIFVALIIITFQEQGDKMMEECSLEKNERACIDFAISAKPLTRYMPQNRHTFQYRVWHFVVSPSFEYTIMAMIALNTVVLMMKYYSAPCTYELALKYLNIAFTMVFSLECVLKVIAFGFLNYFRDTWNIFDFITVIGSITEIILTDSKLVNTSGFNMSFLKLFRAARLIKLLRQGYTIRILLWTFVQSFKALPYVCLLIAMLFFIYAIIGMQVFGNIKLDEESHINRHNNFRSFFGSLMLLFRSATGEAWQEIMLSCLGEKGCEPDTTAPSGQNENERCGTDLAYVYFVSFIFFCSFLMLNLFVAVIMDNFEYLTRDSSILGPHHLDEFVRVWAEYDRAACGRIHYTEMYEMLTLMSPPLGLGKRCPSKVAYKRLVLMNMPVAEDMTVHFTSTLMALIRTALDIKIAKGGADRQQLDSELQKETLAIWPHLSQKMLDLLVPMPKASDLTVGKIYAAMMIMDYYKQSKVKKQRQQLEEQKNAPMFQRMEPSSLPQEIIANAKALPYLQQDPVSGLSGRSGYPSMSPLSPQDIFQLACMDPADDGQFQERQSLEPEVSELKSVQPSNHGIYLPSDTQEHAGSGRASSMPRLTVDPQVVTDPSSMRRSFSTIRDKRSNSSWLEEFSMERSSENTYKSRRRSYHSSLRLSAHRLNSDSGHKSDTHRSGGRERGRSKERKHLLSPDVSRCNSEERGTQADWESPERRQSRSPSEGRSQTPNRQGTGSLSESSIPSVSDTSTPRRSRRQLPPVPPKPRPLLSYSSLIRHAGSISPPADGSEEGSPLTSQALESNNACLTESSNSPHPQQSQHASPQRYISEPYLALHEDSHASDCGEEETLTFEAAVATSLGRSNTIGSAPPLRHSWQMPNGHYRRRRRGGPGPGMMCGAVNNLLSDTEEDDKC.

Residues 1-38 (MARFGEAVVARPGSGDGDSDQSRNRQGTPVPASGQAAA) form a disordered region. At 1–89 (MARFGEAVVA…KYAKKLIDWP (89 aa)) the chain is on the cytoplasmic side. Phosphoserine occurs at positions 14 and 19. Residues 76–354 (NIVRKYAKKL…LVLGVLSGEF (279 aa)) form an I repeat. A helical transmembrane segment spans residues 90–108 (PFEYMILATIIANCIVLAL). The Extracellular portion of the chain corresponds to 109–127 (EQHLPEDDKTPMSRRLEKT). A helical membrane pass occupies residues 128–146 (EPYFIGIFCFEAGIKIVAL). Topologically, residues 147–158 (GFIFHKGSYLRN) are cytoplasmic. The chain crosses the membrane as a helical span at residues 159 to 173 (GWNVMDFIVVLSGIL). Over 174-185 (ATAGTHFNTHVD) the chain is Extracellular. A helical transmembrane segment spans residues 186–205 (LRTLRAVRVLRPLKLVSGIP). Residues 206–223 (SLQIVLKSIMKAMVPLLQ) are Cytoplasmic-facing. The helical transmembrane segment at 224–244 (IGLLLFFAILMFAIIGLEFYS) threads the bilayer. At 245–326 (GKLHRACFMN…NTNDALGATW (82 aa)) the chain is on the extracellular side. An N-linked (GlcNAc...) asparagine glycan is attached at Asn254. Residues 327-350 (NWLYFIPLIIIGSFFVLNLVLGVL) traverse the membrane as a helical segment. At 351-476 (SGEFAKERER…ISIRHMVKSQ (126 aa)) the chain is on the cytoplasmic side. The interval 374–391 (QQIERELNGYRAWIDKAE) is binding to the beta subunit. Asp426 serves as a coordination point for Ca(2+). The residue at position 427 (Ser427) is a Phosphoserine. Residues Ser428, Glu430, and Cys432 each coordinate Ca(2+). Phosphothreonine is present on Thr440. The II repeat unit spans residues 462–706 (ERLLRISIRH…VFLAIAVDNL (245 aa)). Residues 477–496 (VFYWIVLSLVALNTACVAIV) traverse the membrane as a helical segment. The Extracellular segment spans residues 497–509 (HHNQPQWLTHLLY). The helical transmembrane segment at 510–529 (YAEFLFLGLFLLEMSLKMYG) threads the bilayer. Residues 530 to 538 (MGPRLYFHS) are Cytoplasmic-facing. Residues 539–557 (SFNCFDFGVTVGSIFEVVW) form a helical membrane-spanning segment. Topologically, residues 558-567 (AIFRPGTSFG) are extracellular. A helical transmembrane segment spans residues 568-586 (ISVLRALRLLRIFKITKYW). Residues 587-605 (ASLRNLVVSLMSSMKSIIS) are Cytoplasmic-facing. Residues 606–625 (LLFLLFLFIVVFALLGMQLF) traverse the membrane as a helical segment. The Extracellular portion of the chain corresponds to 626–678 (GGRFNFNDGTPSANFDTFPAAIMTVFQILTGEDWNEVMYNGIRSQGGVSSGMW). The chain crosses the membrane as a helical span at residues 679-703 (SAIYFIVLTLFGNYTLLNVFLAIAV). Topologically, residues 704 to 1148 (DNLANAQELT…TNPIRRACHY (445 aa)) are cytoplasmic. Residues 729 to 774 (LQKAKEVSPMSAPNMPSIERDRRRRHHMSMWEPRSSHLRERRRRHH) form a disordered region. Ser736, Ser745, Ser793, Ser815, and Ser855 each carry phosphoserine. Positions 851-984 (SRGGSLKGDG…EERAQDLRRT (134 aa)) are disordered. The segment covering 866-875 (ALDNQRTPLS) has biased composition (polar residues). Positions 913 to 926 (RHRQSQRRSRHRRV) are enriched in basic residues. Residues 933 to 945 (SSSASRSRSASQE) are compositionally biased toward low complexity. Phosphoserine is present on Ser947. The segment covering 955–983 (EGEKDHELRGNHGAKEPTIQEERAQDLRR) has biased composition (basic and acidic residues). Ser1097 bears the Phosphoserine mark. The segment at 1103 to 1125 (EIREDEEEVEKKKQKKEKRETGK) is disordered. One copy of the III repeat lies at 1140-1426 (NPIRRACHYI…IFVALIIITF (287 aa)). The helical transmembrane segment at 1149-1165 (IVNLRYFEMCILLVIAA) threads the bilayer. Topologically, residues 1166–1189 (SSIALAAEDPVLTNSERNKVLRYF) are extracellular. The helical transmembrane segment at 1190 to 1209 (DYVFTGVFTFEMVIKMIDQG) threads the bilayer. Residues 1210–1217 (LILQDGSY) are Cytoplasmic-facing. The chain crosses the membrane as a helical span at residues 1218–1240 (FRDLWNILDFVVVVGALVAFALA). The Extracellular segment spans residues 1241–1254 (NALGTNKGRDIKTI). Residues 1255-1272 (KSLRVLRVLRPLKTIKRL) form a helical membrane-spanning segment. Topologically, residues 1273-1291 (PKLKAVFDCVVTSLKNVFN) are cytoplasmic. The helical transmembrane segment at 1292-1311 (ILIVYKLFMFIFAVIAVQLF) threads the bilayer. The Extracellular segment spans residues 1312 to 1398 (KGKFFYCTDS…RGPSRSNRME (87 aa)). Residues 1399–1422 (MSIFYVVYFVVFPFFFVNIFVALI) traverse the membrane as a helical segment. Topologically, residues 1423 to 1479 (IITFQEQGDKMMEECSLEKNERACIDFAISAKPLTRYMPQNRHTFQYRVWHFVVSPS) are cytoplasmic. The stretch at 1463–1726 (NRHTFQYRVW…LFVAVIMDNF (264 aa)) is one IV repeat. Residues 1480–1498 (FEYTIMAMIALNTVVLMMK) traverse the membrane as a helical segment. The Extracellular segment spans residues 1499-1513 (YYSAPCTYELALKYL). Residues 1514–1533 (NIAFTMVFSLECVLKVIAFG) form a helical membrane-spanning segment. Residues 1534–1541 (FLNYFRDT) are Cytoplasmic-facing. Residues 1542 to 1560 (WNIFDFITVIGSITEIILT) traverse the membrane as a helical segment. At 1561–1571 (DSKLVNTSGFN) the chain is on the extracellular side. N-linked (GlcNAc...) asparagine glycosylation is found at Asn1566 and Asn1571. A helical transmembrane segment spans residues 1572–1590 (MSFLKLFRAARLIKLLRQG). At 1591-1609 (YTIRILLWTFVQSFKALPY) the chain is on the cytoplasmic side. The helical transmembrane segment at 1610–1629 (VCLLIAMLFFIYAIIGMQVF) threads the bilayer. Over 1630 to 1698 (GNIKLDEESH…NENERCGTDL (69 aa)) the chain is Extracellular. A helical transmembrane segment spans residues 1699–1724 (AYVYFVSFIFFCSFLMLNLFVAVIMD). The Cytoplasmic portion of the chain corresponds to 1725-2313 (NFEYLTRDSS…LSDTEEDDKC (589 aa)). In terms of domain architecture, EF-hand spans 1739–1774 (HHLDEFVRVWAEYDRAACGRIHYTEMYEMLTLMSPP). The Ca(2+) site is built by Asp1752, Arg1758, and Glu1763. Disordered regions lie at residues 1970–2170 (VSEL…RPLL), 2206–2225 (CLTE…ASPQ), and 2263–2295 (SNTI…GPGM). A compositionally biased stretch (polar residues) spans 2012-2023 (TDPSSMRRSFST). A compositionally biased stretch (low complexity) spans 2055–2064 (HSSLRLSAHR). A compositionally biased stretch (basic and acidic residues) spans 2065 to 2085 (LNSDSGHKSDTHRSGGRERGR). Residues Ser2094 and Ser2113 each carry the phosphoserine modification. The segment covering 2101–2118 (NSEERGTQADWESPERRQ) has biased composition (basic and acidic residues). The segment covering 2129 to 2152 (TPNRQGTGSLSESSIPSVSDTSTP) has biased composition (polar residues). Residues 2210 to 2225 (SSNSPHPQQSQHASPQ) show a composition bias toward low complexity.

This sequence belongs to the calcium channel alpha-1 subunit (TC 1.A.1.11) family. CACNA1E subfamily. As to quaternary structure, interacts with EFHC1. Voltage-dependent calcium channels are multisubunit complexes, consisting of alpha-1, alpha-2, beta and delta subunits in a 1:1:1:1 ratio. The channel activity is directed by the pore-forming and voltage-sensitive alpha-1 subunit. In many cases, this subunit is sufficient to generate voltage-sensitive calcium channel activity. The auxiliary subunits beta and alpha-2/delta linked by a disulfide bridge regulate the channel activity. As to expression, expressed in neuronal tissues and in kidney.

Its subcellular location is the membrane. It carries out the reaction Ca(2+)(in) = Ca(2+)(out). Its function is as follows. Voltage-sensitive calcium channels (VSCC) mediate the entry of calcium ions into excitable cells. They are also involved in a variety of calcium-dependent processes, including muscle contraction, hormone or neurotransmitter release, gene expression, cell motility, cell division and cell death. The isoform alpha-1E gives rise to R-type calcium currents. R-type calcium channels belong to the 'high-voltage activated' (HVA) group and are blocked by nickel. They are however insensitive to dihydropyridines (DHP). Calcium channels containing alpha-1E subunit could be involved in the modulation of firing patterns of neurons which is important for information processing. Voltage-sensitive calcium channels (VSCC) mediate the entry of calcium ions into excitable cells. They are also involved in a variety of calcium-dependent processes, including muscle contraction, hormone or neurotransmitter release, gene expression, cell motility, cell division and cell death. The isoform alpha-1E gives rise to R-type calcium currents. This is Voltage-dependent R-type calcium channel subunit alpha-1E (CACNA1E) from Homo sapiens (Human).